Consider the following 478-residue polypeptide: MVHLGPKPPQHRKGSFLDVPEYLLKELTELEGLLTVSGETLRKITDHFISELEKGLSKQGGNIPMIPGWVMDFPTGKEMGDYLAIDLGGTNLRVVLVKLGGNRDFDTTQSKFALPENMRTAKSEELWEFIAECLQKFVEEEFRNGVLSNLPLGFTFSYPASQGSINEGYLQRWTKGFDIEGVEGHDVVPMLQAAIEKRKVPIEVVALINDTTGTLVASMYTDPEAKMGLFSGTGCNGAYYDVVDNIPKLEGKVPDDIKSSSPMAINCEYGAFDNEHIILPRTKYDIQIDEESPRPGQQAFEKMISGYYLGEVLRLILLDLTSKQLIFKDQDLSKLQVPFILDTSIPARIEEDPFENLSDVQELFQEILGIQTTSPERKIIRRLAELIGERSARLSICGIAAICKKRGYKTAHCAADGSVYNKYPGFKERAAKGLRDIFQWESEEDPIVIVPAEDGLGAGAAIIAALTEKRLKDGLPLV.

A Hexokinase domain is found at 21–465 (EYLLKELTEL…LGAGAAIIAA (445 aa)). The interval 75-208 (TGKEMGDYLA…KVPIEVVALI (134 aa)) is hexokinase small subdomain. Position 111 (K111) interacts with ATP. The tract at residues 151 to 177 (PLGFTFSYPASQGSINEGYLQRWTKGF) is glucose-binding. A hexokinase large subdomain region spans residues 209 to 454 (NDTTGTLVAS…DPIVIVPAED (246 aa)).

It belongs to the hexokinase family. Monomer.

It carries out the reaction a D-hexose + ATP = a D-hexose 6-phosphate + ADP + H(+). It catalyses the reaction D-fructose + ATP = D-fructose 6-phosphate + ADP + H(+). The enzyme catalyses D-glucose + ATP = D-glucose 6-phosphate + ADP + H(+). It participates in carbohydrate metabolism; hexose metabolism. Its pathway is carbohydrate degradation; glycolysis; D-glyceraldehyde 3-phosphate and glycerone phosphate from D-glucose: step 1/4. Its function is as follows. Catalyzes the phosphorylation of hexose, such as D-glucose and D-fructose, to hexose 6-phosphate (D-glucose 6-phosphate and D-fructose 6-phosphate, respectively). Mediates the initial step of glycolysis by catalyzing phosphorylation of D-glucose to D-glucose 6-phosphate. The protein is Hexokinase (HXK) of Schwanniomyces occidentalis (Yeast).